We begin with the raw amino-acid sequence, 367 residues long: tRNA-dihydrouridine(20a/20b) synthase [NAD(P)+] (367 aa).

FMN is bound by residues 45–47 (PMV) and Gln-99. Residue Cys-128 is the Proton donor of the active site. FMN-binding positions include Lys-169, His-197, 231–233 (NGD), and 255–256 (VR).

Belongs to the Dus family. Dus4 subfamily. FMN is required as a cofactor.

It carries out the reaction 5,6-dihydrouridine(20a) in tRNA + NADP(+) = uridine(20a) in tRNA + NADPH + H(+). The catalysed reaction is 5,6-dihydrouridine(20a) in tRNA + NAD(+) = uridine(20a) in tRNA + NADH + H(+). It catalyses the reaction 5,6-dihydrouridine(20b) in tRNA + NAD(+) = uridine(20b) in tRNA + NADH + H(+). The enzyme catalyses 5,6-dihydrouridine(20b) in tRNA + NADP(+) = uridine(20b) in tRNA + NADPH + H(+). It carries out the reaction a 5,6-dihydrouridine in mRNA + NAD(+) = a uridine in mRNA + NADH + H(+). The catalysed reaction is a 5,6-dihydrouridine in mRNA + NADP(+) = a uridine in mRNA + NADPH + H(+). Its function is as follows. Catalyzes the synthesis of dihydrouridine, a modified base found in the D-loop of most tRNAs. Specifically modifies U20a and U20b in cytoplasmic tRNAs. Also able to mediate dihydrouridylation of some mRNAs, thereby affecting their translation. The protein is tRNA-dihydrouridine(20a/20b) synthase [NAD(P)+] of Saccharomyces cerevisiae (strain ATCC 204508 / S288c) (Baker's yeast).